We begin with the raw amino-acid sequence, 193 residues long: dTTP/UTP pyrophosphatase (193 aa).

The active-site Proton acceptor is aspartate 75.

It belongs to the Maf family. YhdE subfamily. Requires a divalent metal cation as cofactor.

It is found in the cytoplasm. It carries out the reaction dTTP + H2O = dTMP + diphosphate + H(+). It catalyses the reaction UTP + H2O = UMP + diphosphate + H(+). Nucleoside triphosphate pyrophosphatase that hydrolyzes dTTP and UTP. May have a dual role in cell division arrest and in preventing the incorporation of modified nucleotides into cellular nucleic acids. In Chlorobium phaeovibrioides (strain DSM 265 / 1930) (Prosthecochloris vibrioformis (strain DSM 265)), this protein is dTTP/UTP pyrophosphatase.